The following is a 388-amino-acid chain: L-cysteine desulfidase (388 aa).

Cys-25 acts as the Proton acceptor in catalysis. [4Fe-4S] cluster is bound by residues Cys-282, Cys-322, and Cys-329.

It belongs to the L-cysteine desulfidase family. In terms of assembly, homotrimer. The cofactor is [4Fe-4S] cluster.

The catalysed reaction is L-cysteine + H2O = hydrogen sulfide + pyruvate + NH4(+) + H(+). Catalyzes the cleavage of L-cysteine to form 2-aminoprop-2-enoate and sulfide. The former then spontaneously hydrolyzes to pyruvate and NH(3). May be responsible for the production of sulfide required for the biosynthesis of iron-sulfur centers in this archaea. Is very specific for L-cysteine, with no activity being detected with D-cysteine, L-homocysteine, 3-mercaptopropionate (cysteine without the amino group), cysteamine (cysteine without the carboxylate), or mercaptolactate (the hydroxyl analog of cysteine). This Methanocaldococcus jannaschii (strain ATCC 43067 / DSM 2661 / JAL-1 / JCM 10045 / NBRC 100440) (Methanococcus jannaschii) protein is L-cysteine desulfidase.